We begin with the raw amino-acid sequence, 313 residues long: Cilia- and flagella-associated protein 36 (313 aa).

Residues Ser85 and Ser147 each carry the phosphoserine modification. The stretch at 147-187 forms a coiled coil; the sequence is SDLEQEEMKILKEVLRKSKEEYDQEEERKRKKQLSEAKTEE. 2 disordered regions span residues 165–204 and 262–292; these read KEEY…SQGD and KIKQ…TAEE. A compositionally biased stretch (basic and acidic residues) spans 179–189; it reads QLSEAKTEEHP. The span at 192–203 shows a compositional bias: polar residues; it reads ANETAKMSNSQG. Ser201 is modified (phosphoserine). Positions 271-292 are enriched in basic and acidic residues; that stretch reads QKGKPAGEVEEMTEKPEMTAEE.

It belongs to the CFAP36 family. Interacts with ARL3.

The protein resides in the nucleus. It is found in the cytoplasm. The protein localises to the cell projection. It localises to the cilium. Its subcellular location is the flagellum. In terms of biological role, may act as an effector for ARL3. This Bos taurus (Bovine) protein is Cilia- and flagella-associated protein 36.